The primary structure comprises 133 residues: Large ribosomal subunit protein bL20 (133 aa).

Belongs to the bacterial ribosomal protein bL20 family.

Its function is as follows. Binds directly to 23S ribosomal RNA and is necessary for the in vitro assembly process of the 50S ribosomal subunit. It is not involved in the protein synthesizing functions of that subunit. The sequence is that of Large ribosomal subunit protein bL20 from Bartonella bacilliformis (strain ATCC 35685 / KC583 / Herrer 020/F12,63).